A 236-amino-acid polypeptide reads, in one-letter code: UPF0257 lipoprotein YnfC (236 aa).

Positions 1–16 (MKKPLLLTLLCMILAG) are cleaved as a signal peptide. Cys-17 carries N-palmitoyl cysteine lipidation. A lipid anchor (S-diacylglycerol cysteine) is attached at Cys-17.

This sequence belongs to the UPF0257 family.

Its subcellular location is the cell membrane. In Salmonella dublin (strain CT_02021853), this protein is UPF0257 lipoprotein YnfC.